We begin with the raw amino-acid sequence, 142 residues long: Universal stress protein D (142 aa).

The protein belongs to the universal stress protein A family.

It localises to the cytoplasm. In terms of biological role, required for resistance to DNA-damaging agents. This is Universal stress protein D (uspD) from Escherichia coli (strain K12).